Consider the following 227-residue polypeptide: Cytochrome c oxidase subunit 2 (227 aa).

Over M1–S14 the chain is Mitochondrial intermembrane. The chain crosses the membrane as a helical span at residues P15–M45. The Mitochondrial matrix segment spans residues L46 to Q59. The helical transmembrane segment at E60–M87 threads the bilayer. The Mitochondrial intermembrane segment spans residues D88–V227. Residues H161, C196, E198, C200, H204, and M207 each coordinate Cu cation. E198 is a Mg(2+) binding site. The residue at position 218 (Y218) is a Phosphotyrosine.

The protein belongs to the cytochrome c oxidase subunit 2 family. Component of the cytochrome c oxidase (complex IV, CIV), a multisubunit enzyme composed of 14 subunits. The complex is composed of a catalytic core of 3 subunits MT-CO1, MT-CO2 and MT-CO3, encoded in the mitochondrial DNA, and 11 supernumerary subunits COX4I, COX5A, COX5B, COX6A, COX6B, COX6C, COX7A, COX7B, COX7C, COX8 and NDUFA4, which are encoded in the nuclear genome. The complex exists as a monomer or a dimer and forms supercomplexes (SCs) in the inner mitochondrial membrane with NADH-ubiquinone oxidoreductase (complex I, CI) and ubiquinol-cytochrome c oxidoreductase (cytochrome b-c1 complex, complex III, CIII), resulting in different assemblies (supercomplex SCI(1)III(2)IV(1) and megacomplex MCI(2)III(2)IV(2)). Found in a complex with TMEM177, COA6, COX18, COX20, SCO1 and SCO2. Interacts with TMEM177 in a COX20-dependent manner. Interacts with COX20. Interacts with COX16. Cu cation serves as cofactor.

It is found in the mitochondrion inner membrane. The enzyme catalyses 4 Fe(II)-[cytochrome c] + O2 + 8 H(+)(in) = 4 Fe(III)-[cytochrome c] + 2 H2O + 4 H(+)(out). In terms of biological role, component of the cytochrome c oxidase, the last enzyme in the mitochondrial electron transport chain which drives oxidative phosphorylation. The respiratory chain contains 3 multisubunit complexes succinate dehydrogenase (complex II, CII), ubiquinol-cytochrome c oxidoreductase (cytochrome b-c1 complex, complex III, CIII) and cytochrome c oxidase (complex IV, CIV), that cooperate to transfer electrons derived from NADH and succinate to molecular oxygen, creating an electrochemical gradient over the inner membrane that drives transmembrane transport and the ATP synthase. Cytochrome c oxidase is the component of the respiratory chain that catalyzes the reduction of oxygen to water. Electrons originating from reduced cytochrome c in the intermembrane space (IMS) are transferred via the dinuclear copper A center (CU(A)) of subunit 2 and heme A of subunit 1 to the active site in subunit 1, a binuclear center (BNC) formed by heme A3 and copper B (CU(B)). The BNC reduces molecular oxygen to 2 water molecules using 4 electrons from cytochrome c in the IMS and 4 protons from the mitochondrial matrix. The protein is Cytochrome c oxidase subunit 2 (MT-CO2) of Canis simensis (Ethiopian wolf).